Here is a 2427-residue protein sequence, read N- to C-terminus: Interferon-induced very large GTPase 1 (2427 aa).

In terms of domain architecture, VLIG-type G spans 1485 to 1726 (DKRLFVLSVL…KISDFKFRVQ (242 aa)). GTP-binding positions include 1495–1502 (GLQSSGKS), 1548–1551 (DTEG), and 1625–1628 (TAKD).

It belongs to the TRAFAC class dynamin-like GTPase superfamily. Very large inducible GTPase (VLIG) family. As to expression, widely expressed. Expressed at low basal level in lung, heart, thymus and spleen; at still lower level in liver, ovary, kidney and brain. Expressed at very weak level in testis. Undetectable in embryo.

The protein resides in the cytoplasm. It is found in the cytosol. The protein localises to the nucleus. In Mus musculus (Mouse), this protein is Interferon-induced very large GTPase 1 (Gvin1).